An 89-amino-acid polypeptide reads, in one-letter code: Small ribosomal subunit protein uS15 (89 aa).

This sequence belongs to the universal ribosomal protein uS15 family. Part of the 30S ribosomal subunit. Forms a bridge to the 50S subunit in the 70S ribosome, contacting the 23S rRNA.

One of the primary rRNA binding proteins, it binds directly to 16S rRNA where it helps nucleate assembly of the platform of the 30S subunit by binding and bridging several RNA helices of the 16S rRNA. In terms of biological role, forms an intersubunit bridge (bridge B4) with the 23S rRNA of the 50S subunit in the ribosome. This is Small ribosomal subunit protein uS15 from Streptococcus gordonii (strain Challis / ATCC 35105 / BCRC 15272 / CH1 / DL1 / V288).